Consider the following 647-residue polypeptide: A-type voltage-gated potassium channel KCND1 (647 aa).

Topologically, residues 1 to 183 are cytoplasmic; sequence MAAGLATWLP…RAFENPHTST (183 aa). The tract at residues 2 to 20 is interaction with KCNIP1, KCNIP2, and other family members; that stretch reads AAGLATWLPFARAAAVGWL. Zn(2+) is bound by residues histidine 104, cysteine 131, and cysteine 132. The tract at residues 144 to 163 is disordered; the sequence is AERLAEDEEAEQAGDGPALP. Residues 184–205 traverse the membrane as a helical segment; sequence AALVFYYVTGFFIAVSVIANVV. Residues 206–230 are Extracellular-facing; sequence ETIPCRGSARRSSREQPCGERFPQA. A helical transmembrane segment spans residues 231–252; the sequence is FFCMDTACVLIFTGEYLLRLFA. Topologically, residues 253–263 are cytoplasmic; that stretch reads APSRCRFLRSV. A helical transmembrane segment spans residues 264 to 284; sequence MSLIDVVAILPYYIGLLVPKN. Residues 285 to 287 are Extracellular-facing; that stretch reads DDV. The helical; Voltage-sensor transmembrane segment at 288-308 threads the bilayer; it reads SGAFVTLRVFRVFRIFKFSRH. Over 309 to 323 the chain is Cytoplasmic; sequence SQGLRILGYTLKSCA. The interval 310 to 323 is S4-S5 linker; sequence QGLRILGYTLKSCA. Residues 324–345 form a helical membrane-spanning segment; it reads SELGFLLFSLTMAIIIFATVMF. Topologically, residues 346–359 are extracellular; it reads YAEKGTNKTNFTSI. 2 N-linked (GlcNAc...) asparagine glycosylation sites follow: asparagine 352 and asparagine 355. Positions 360-371 form an intramembrane region, helical; it reads PAAFWYTIVTMT. The Selectivity filter signature appears at 372–377; sequence TLGYGD. An intramembrane segment occupies 372–379; that stretch reads TLGYGDMV. Topologically, residues 380–386 are extracellular; that stretch reads PSTIAGK. A helical transmembrane segment spans residues 387-415; the sequence is IFGSICSLSGVLVIALPVPVIVSNFSRIY. Residues 416 to 647 are Cytoplasmic-facing; the sequence is HQNQRADKRR…FPETVKISSL (232 aa). Serine 458 carries the post-translational modification Phosphoserine. Residues 474–489 form a required for dendritic targeting region; it reads FEQQHHHLLHCLEKTT. Residues 506–524 are compositionally biased toward low complexity; sequence VSPGGRTSRSTSVSSQPVG. The segment at 506–531 is disordered; sequence VSPGGRTSRSTSVSSQPVGPGSLLSS. At serine 555 the chain carries Phosphoserine. The interval 601–634 is disordered; the sequence is IPTPPANTPDESQPSSPGGGGRAGSTLRNSSLGT.

This sequence belongs to the potassium channel family. D (Shal) (TC 1.A.1.2) subfamily. Kv4.1/KCND1 sub-subfamily. As to quaternary structure, component of heteromultimeric potassium channels. Identified in potassium channel complexes containing KCND1, KCND2, KCND3, KCNIP1, KCNIP2, KCNIP3, KCNIP4, DPP6 and DPP10. As to expression, widely expressed. Highly expressed in brain, in particular in cerebellum and thalamus; detected at lower levels in the other parts of the brain.

It localises to the cell membrane. The enzyme catalyses K(+)(in) = K(+)(out). Its function is as follows. A-type voltage-gated potassium channel that mediates transmembrane potassium transport in excitable membranes in the brain. Mediates A-type current I(SA) in suprachiasmatic nucleus (SCN) neurons. Exhibits a low-threshold A-type current with a hyperpolarized steady-state inactivation midpoint and the recovery process was steeply voltage-dependent, with recovery being markedly faster at more negative potentials. May regulates repetitive firing rates in the suprachiasmatic nucleus (SCN) neurons and circadian rhythms in neuronal excitability and behavior. Contributes to the regulation of the circadian rhythm of action potential firing in suprachiasmatic nucleus neurons, which regulates the circadian rhythm of locomotor activity. The regulatory subunit KCNIP1 modulates the kinetics of channel inactivation, increases the current amplitudes and accelerates recovery from inactivation, shifts activation in a depolarizing direction. The regulatory subunit DPP10 decreases the voltage sensitivity of the inactivation channel gating. This chain is A-type voltage-gated potassium channel KCND1, found in Homo sapiens (Human).